We begin with the raw amino-acid sequence, 176 residues long: Co-chaperone protein HscB homolog (176 aa).

The region spanning 8–80 is the J domain; it reads DFFALFGLPV…LRRATYLLKL (73 aa).

This sequence belongs to the HscB family. In terms of assembly, interacts with HscA and stimulates its ATPase activity.

Its function is as follows. Co-chaperone involved in the maturation of iron-sulfur cluster-containing proteins. Seems to help targeting proteins to be folded toward HscA. The sequence is that of Co-chaperone protein HscB homolog from Cupriavidus taiwanensis (strain DSM 17343 / BCRC 17206 / CCUG 44338 / CIP 107171 / LMG 19424 / R1) (Ralstonia taiwanensis (strain LMG 19424)).